A 622-amino-acid chain; its full sequence is Cilia- and flagella-associated protein 206 (622 aa).

The segment at 570 to 592 (SQVYPPKDTSTQSMREDSTGVPR) is disordered.

This sequence belongs to the CFAP206 family.

The protein resides in the cytoplasm. Its subcellular location is the cytoskeleton. It is found in the cilium axoneme. The protein localises to the cilium basal body. Essential for sperm motility and is involved in the regulation of the beating frequency of motile cilia on the epithelial cells of the respiratory tract. Required for the establishment of radial spokes in sperm flagella. The chain is Cilia- and flagella-associated protein 206 from Homo sapiens (Human).